We begin with the raw amino-acid sequence, 121 residues long: Huntingtin-interacting protein K (121 aa).

Residues Met1–Thr13 are compositionally biased toward acidic residues. The tract at residues Met1 to Lys75 is disordered. 2 stretches are compositionally biased toward basic and acidic residues: residues Arg20–Ile47 and Gly60–Lys75. Ser30 is modified (phosphoserine). The segment at Leu52–Asn121 is required for association with the NAA10-NAA15 complex. Residues Arg62 to Glu107 adopt a coiled-coil conformation.

In terms of assembly, component of the N-terminal acetyltransferase A (NatA)/HYPK complex at least composed of NAA10, NAA15 and HYPK, which has N-terminal acetyltransferase activity. Within the complex interacts with NAA10. Within the complex interacts with NAA15. Predominantly interacts with NAA15 in the NAA10-NAA15 complex (also called the NatA complex); the interaction with the NatA complex reduces the acetylation activity of the NatA complex. Interacts with HTT (via N-terminus). The NatA complex is required for HYPK stability and for reducing polyQ aggregation of HTT. Component of the N-terminal acetyltransferase E (NatE)/HYPK complex at least composed of NAA10, NAA15, NAA50 and HYPK. Within the complex interacts with NAA10 and NAA15. Does not interact with NAA50. Interaction with NAA15 reduces the capacity of NAA15 to interact with NAA50. Its capacity to interact with the NatA complex is reduced by NAA50. Does not interact with the N-terminal acetyltransferase B (NatB) complex component NAA25 or the N-terminal acetyltransferase C (NatC) complex component NAA35.

It localises to the nucleus. It is found in the cytoplasm. Component of several N-terminal acetyltransferase complexes. Inhibits the N-terminal acetylation activity of the N-terminal acetyltransferase NAA10-NAA15 complex (also called the NatA complex). Has chaperone-like activity preventing polyglutamine (polyQ) aggregation of HTT in neuronal cells probably while associated with the NatA complex. May play a role in the NatA complex-mediated N-terminal acetylation of PCNP. The polypeptide is Huntingtin-interacting protein K (Homo sapiens (Human)).